The sequence spans 244 residues: Lipoprotein-releasing system ATP-binding protein LolD (244 aa).

One can recognise an ABC transporter domain in the interval 19–244; sequence IRAEALAKTY…KLRELAPSAV (226 aa). 55–62 contacts ATP; sequence GASGAGKS.

This sequence belongs to the ABC transporter superfamily. Lipoprotein translocase (TC 3.A.1.125) family. In terms of assembly, the complex is composed of two ATP-binding proteins (LolD) and two transmembrane proteins (LolC and LolE).

It is found in the cell inner membrane. Part of the ABC transporter complex LolCDE involved in the translocation of mature outer membrane-directed lipoproteins, from the inner membrane to the periplasmic chaperone, LolA. Responsible for the formation of the LolA-lipoprotein complex in an ATP-dependent manner. The sequence is that of Lipoprotein-releasing system ATP-binding protein LolD from Xanthomonas oryzae pv. oryzae (strain MAFF 311018).